A 105-amino-acid chain; its full sequence is Dynein axonemal light chain 4 (105 aa).

Belongs to the dynein light chain family. As to quaternary structure, consists of at least two heavy chains and a number of intermediate and light chains.

It is found in the cytoplasm. Its subcellular location is the cytoskeleton. It localises to the cilium axoneme. Force generating protein of respiratory cilia. Produces force towards the minus ends of microtubules. Dynein has ATPase activity. This Mus musculus (Mouse) protein is Dynein axonemal light chain 4 (Dnal4).